Consider the following 940-residue polypeptide: UvrABC system protein A (940 aa).

32–39 (GLSGSGKS) contacts ATP. The C4-type zinc finger occupies 252 to 279 (CIDCGISIDEISPRLFSFNSPFGKCDYC). 2 ABC transporter domains span residues 309-589 (WANT…EGSL) and 609-937 (SNGK…HYLK). 641-648 (GVSGSGKS) is an ATP binding site. A C4-type zinc finger spans residues 740-766 (CEACKGDGIIKIEMQFLSDVYVPCEIC).

It belongs to the ABC transporter superfamily. UvrA family. Forms a heterotetramer with UvrB during the search for lesions.

Its subcellular location is the cytoplasm. Functionally, the UvrABC repair system catalyzes the recognition and processing of DNA lesions. UvrA is an ATPase and a DNA-binding protein. A damage recognition complex composed of 2 UvrA and 2 UvrB subunits scans DNA for abnormalities. When the presence of a lesion has been verified by UvrB, the UvrA molecules dissociate. This chain is UvrABC system protein A, found in Clostridium tetani (strain Massachusetts / E88).